Consider the following 221-residue polypeptide: Phosphate-specific transport system accessory protein PhoU homolog 1 (221 aa).

It belongs to the PhoU family. As to quaternary structure, homodimer.

It localises to the cytoplasm. Its function is as follows. Plays a role in the regulation of phosphate uptake. In this role, it may bind, possibly as a chaperone, to PhoR, PhoP or a PhoR-PhoP complex to promote dephosphorylation of phospho-PhoP, or inhibit formation of the PhoR-PhoP transitory complex. In Mycobacterium bovis (strain ATCC BAA-935 / AF2122/97), this protein is Phosphate-specific transport system accessory protein PhoU homolog 1 (phoU1).